We begin with the raw amino-acid sequence, 314 residues long: BURP domain-containing protein 8 (314 aa).

Positions 1–16 are cleaved as a signal peptide; it reads MDLVRLTSLLPPSVMG. The 217-residue stretch at 98-314 folds into the BURP domain; sequence FFLEKDLFPG…PLGDMLWVRN (217 aa).

As to expression, expressed in shoot and panicles.

The chain is BURP domain-containing protein 8 (BURP8) from Oryza sativa subsp. japonica (Rice).